We begin with the raw amino-acid sequence, 286 residues long: Pantothenate synthetase (286 aa).

30–37 contacts ATP; that stretch reads MGNLHRGH. Histidine 37 acts as the Proton donor in catalysis. Residue glutamine 61 coordinates (R)-pantoate. Glutamine 61 is a binding site for beta-alanine. Residue 149 to 152 participates in ATP binding; the sequence is GEKD. Glutamine 155 lines the (R)-pantoate pocket. Residues valine 178 and 186-189 each bind ATP; that span reads LSSR.

The protein belongs to the pantothenate synthetase family. As to quaternary structure, homodimer.

It is found in the cytoplasm. It carries out the reaction (R)-pantoate + beta-alanine + ATP = (R)-pantothenate + AMP + diphosphate + H(+). The protein operates within cofactor biosynthesis; (R)-pantothenate biosynthesis; (R)-pantothenate from (R)-pantoate and beta-alanine: step 1/1. Catalyzes the condensation of pantoate with beta-alanine in an ATP-dependent reaction via a pantoyl-adenylate intermediate. This is Pantothenate synthetase from Nitrosococcus oceani (strain ATCC 19707 / BCRC 17464 / JCM 30415 / NCIMB 11848 / C-107).